Reading from the N-terminus, the 714-residue chain is Cadherin-13 (714 aa).

The N-terminal stretch at 1 to 22 (MQPRTPLTLCVLLSQVLLVTSA) is a signal peptide. Positions 23-138 (DDLECTPGFQ…RTSPVPRQKR (116 aa)) are excised as a propeptide. 5 Cadherin domains span residues 143–245 (SPIL…RPIF), 246–363 (REGP…SPKF), 364–477 (TKKE…GPVF), 478–585 (YPDP…APVI), and 586–680 (YPTV…VQVC). The tract at residues 156–183 (PRDVGKVVDSDRPEGSKFRLTGKGVDQD) is disordered. Residues 158-172 (DVGKVVDSDRPEGSK) show a composition bias toward basic and acidic residues. Residues Asn-382, Asn-489, Asn-500, Asn-530, Asn-598, Asn-638, and Asn-671 are each glycosylated (N-linked (GlcNAc...) asparagine). Gly-693 carries the GPI-anchor amidated glycine lipid modification. A propeptide spans 694 to 714 (ALHLSLSLLLLFSLLSLLSGL) (removed in mature form).

By contrast to classical cadherins, homodimerization in trans is not mediated by cadherin EC1 domain strand-swapping, but instead through a homophilic adhesive interface which joins two elongated EC1-EC2 domains through a region near their Ca2+-binding sites to form a tetrahedral, X-like shape.

The protein localises to the cell membrane. It is found in the cytoplasm. Functionally, cadherins are calcium-dependent cell adhesion proteins. They preferentially interact with themselves in a homophilic manner in connecting cells; cadherins may thus contribute to the sorting of heterogeneous cell types. May act as a negative regulator of neural cell growth. This Mus musculus (Mouse) protein is Cadherin-13 (Cdh13).